We begin with the raw amino-acid sequence, 133 residues long: Ribosome-binding factor A (133 aa).

Belongs to the RbfA family. In terms of assembly, monomer. Binds 30S ribosomal subunits, but not 50S ribosomal subunits or 70S ribosomes.

It is found in the cytoplasm. One of several proteins that assist in the late maturation steps of the functional core of the 30S ribosomal subunit. Associates with free 30S ribosomal subunits (but not with 30S subunits that are part of 70S ribosomes or polysomes). Required for efficient processing of 16S rRNA. May interact with the 5'-terminal helix region of 16S rRNA. The sequence is that of Ribosome-binding factor A from Acinetobacter baumannii (strain AB307-0294).